We begin with the raw amino-acid sequence, 96 residues long: uncharacterized protein (96 aa).

Essential for virus function. This is an uncharacterized protein from Saccharolobus solfataricus (Sulfolobus solfataricus).